Reading from the N-terminus, the 242-residue chain is Small ribosomal subunit protein uS2 (242 aa).

Belongs to the universal ribosomal protein uS2 family.

In Neisseria gonorrhoeae (strain ATCC 700825 / FA 1090), this protein is Small ribosomal subunit protein uS2.